The chain runs to 503 residues: Maturase K (503 aa).

This sequence belongs to the intron maturase 2 family. MatK subfamily.

It is found in the plastid. The protein resides in the chloroplast. In terms of biological role, usually encoded in the trnK tRNA gene intron. Probably assists in splicing its own and other chloroplast group II introns. The protein is Maturase K of Psilotum nudum (Whisk fern).